We begin with the raw amino-acid sequence, 276 residues long: MELYQGVVLGVLQGLTEFLPVSSSGHLVLGQNFFGITEPALSFDISVHLGTLFAVALVFFKEIKAMVVSLGRLVQNLGSLKNFKQVVKADGDVRLAALIIVGSIPTAVIGLILKNYVHALFSSLVIVGSMLMVTGTFLWLTRHSTPGGKKVEQIGFGTALFIGVCQGVAVIPGISRSGATIAAGLFSGVERETAARYSFLLSMPAIAGAEILSLKESFATGAGFDTVTLLSTLTAFIVGTLALVALLKIVKKGRFYLFAPYCWVVGLISIIAGFVA.

A run of 8 helical transmembrane segments spans residues 1–21 (MELYQGVVLGVLQGLTEFLPV), 40–60 (ALSFDISVHLGTLFAVALVFF), 93–113 (VRLAALIIVGSIPTAVIGLIL), 120–140 (LFSSLVIVGSMLMVTGTFLWL), 154–174 (IGFGTALFIGVCQGVAVIPGI), 199–219 (FLLSMPAIAGAEILSLKESFA), 227–247 (VTLLSTLTAFIVGTLALVALL), and 255–275 (FYLFAPYCWVVGLISIIAGFV).

The protein belongs to the UppP family.

It localises to the cell inner membrane. It carries out the reaction di-trans,octa-cis-undecaprenyl diphosphate + H2O = di-trans,octa-cis-undecaprenyl phosphate + phosphate + H(+). Catalyzes the dephosphorylation of undecaprenyl diphosphate (UPP). Confers resistance to bacitracin. The sequence is that of Undecaprenyl-diphosphatase from Desulforapulum autotrophicum (strain ATCC 43914 / DSM 3382 / VKM B-1955 / HRM2) (Desulfobacterium autotrophicum).